Here is a 116-residue protein sequence, read N- to C-terminus: uncharacterized protein (116 aa).

This is an uncharacterized protein from Aquifex aeolicus (strain VF5).